Reading from the N-terminus, the 64-residue chain is Conotoxin Cal12.4 (64 aa).

A signal peptide spans 1–21 (MKLTCMLVVLLLVLPFGDLIA).

This sequence belongs to the conotoxin O1 superfamily. In terms of processing, contains 4 disulfide bonds. As to expression, expressed by the venom duct.

The protein resides in the secreted. In terms of biological role, probable neurotoxin. The chain is Conotoxin Cal12.4 from Californiconus californicus (California cone).